We begin with the raw amino-acid sequence, 546 residues long: CTP synthase (546 aa).

Residues 1-265 (MTKYVFVTGG…DEIVCHKLNI (265 aa)) are amidoligase domain. Ser13 is a binding site for CTP. Ser13 is a UTP binding site. Residues 14–19 (SLGKGI) and Asp71 contribute to the ATP site. Positions 71 and 139 each coordinate Mg(2+). CTP is bound by residues 146–148 (DIE), 186–191 (KTKPTQ), and Lys222. Residues 186–191 (KTKPTQ) and Lys222 each bind UTP. The Glutamine amidotransferase type-1 domain maps to 290–543 (NIAFVGKYVD…VRAALAHQQK (254 aa)). L-glutamine is bound at residue Gly351. Residue Cys378 is the Nucleophile; for glutamine hydrolysis of the active site. Residues 379–382 (LGMQ), Glu402, and Arg469 each bind L-glutamine. Catalysis depends on residues His516 and Glu518.

Belongs to the CTP synthase family. Homotetramer.

It carries out the reaction UTP + L-glutamine + ATP + H2O = CTP + L-glutamate + ADP + phosphate + 2 H(+). The catalysed reaction is L-glutamine + H2O = L-glutamate + NH4(+). It catalyses the reaction UTP + NH4(+) + ATP = CTP + ADP + phosphate + 2 H(+). Its pathway is pyrimidine metabolism; CTP biosynthesis via de novo pathway; CTP from UDP: step 2/2. Its activity is regulated as follows. Allosterically activated by GTP, when glutamine is the substrate; GTP has no effect on the reaction when ammonia is the substrate. The allosteric effector GTP functions by stabilizing the protein conformation that binds the tetrahedral intermediate(s) formed during glutamine hydrolysis. Inhibited by the product CTP, via allosteric rather than competitive inhibition. Catalyzes the ATP-dependent amination of UTP to CTP with either L-glutamine or ammonia as the source of nitrogen. Regulates intracellular CTP levels through interactions with the four ribonucleotide triphosphates. This Thiobacillus denitrificans (strain ATCC 25259 / T1) protein is CTP synthase.